Reading from the N-terminus, the 625-residue chain is MTTPQHLSDRYELGEILGFGGMSEVHLARDLRLHRDVAVKVLRADLARDPSFYLRFRREAQNAAALNHPAIVAVYDTGEAETPNGPLPYIVMEYVDGVTLRDIVHTDGPIAPRRAIEIIADACQALNFSHQHGIIHRDVKPANIMISKNNAVKVMDFGIARALADTGNSVTQTAAVIGTAQYLSPEQARGETVDARSDVYSLGCVLYEILTGEPPFIGDSPVAVAYQHVREDPVPPSRRHADVTPELDAVVLKALAKNPDNRYQTAAEMRADLIRVHEGQAPDAPKVLTDAERTSMLAAPPADRAGAATQDMPVPRPAGYSKQRSTSVARWLIAVAVLAVLTVVVTVAINMVGGNPRNVQVPDVAEQSADDAQAALQNRGFKTVIDRQPDNEVPPGLVIGTDPEAGSELGAGEQVTINVSTGPEQALVPDVAGLTPTQARQKLKDAGFEKFRESPSPSTPEQKGRVLATNPQANQTAAIINEITIVVGAGPEDAPVLSCAGQNAESCKAILAAGGFTNTVVVEVDNPAAAGQVVGTEPADGQSVPKDTVIQIRVSKGNQFVMPDLVGQFWSDAYPRLTALGWTGVLDKGPDVRDSGQRTNAVVTQSPSAGTPVNKDAKITLSFAA.

At 1–331 (MTTPQHLSDR…KQRSTSVARW (331 aa)) the chain is on the cytoplasmic side. Residues 11–274 (YELGEILGFG…TAAEMRADLI (264 aa)) enclose the Protein kinase domain. ATP contacts are provided by residues 17 to 25 (LGFGGMSEV), lysine 40, and 93 to 95 (EYV). Aspartate 138 serves as the catalytic Proton acceptor. Residues 140–143 (KPAN) and aspartate 156 each bind ATP. Mg(2+) is bound by residues asparagine 143 and aspartate 156. A Phosphoserine; by autocatalysis modification is found at serine 169. Phosphothreonine; by autocatalysis occurs at positions 171, 173, and 294. A Phosphoserine; by autocatalysis modification is found at serine 295. Residues 302-321 (ADRAGAATQDMPVPRPAGYS) form a disordered region. Threonine 309 carries the post-translational modification Phosphothreonine; by autocatalysis. Residues 332–352 (LIAVAVLAVLTVVVTVAINMV) traverse the membrane as a helical segment. Residues 353 to 625 (GGNPRNVQVP…DAKITLSFAA (273 aa)) are Extracellular-facing. PASTA domains are found at residues 355–421 (NPRN…NVST), 422–489 (GPEQ…VVGA), 490–556 (GPED…RVSK), and 557–625 (GNQF…SFAA). The segment at 591–612 (DVRDSGQRTNAVVTQSPSAGTP) is disordered. The span at 597–611 (QRTNAVVTQSPSAGT) shows a compositional bias: polar residues.

This sequence belongs to the protein kinase superfamily. Ser/Thr protein kinase family. Homodimer. Post-translationally, autophosphorylated. Dephosphorylated by PstP.

Its subcellular location is the cell membrane. The catalysed reaction is L-seryl-[protein] + ATP = O-phospho-L-seryl-[protein] + ADP + H(+). It catalyses the reaction L-threonyl-[protein] + ATP = O-phospho-L-threonyl-[protein] + ADP + H(+). By K-252a. Protein kinase that regulates many aspects of mycobacterial physiology. Is a key component of a signal transduction pathway that regulates cell growth, cell shape and cell division via phosphorylation of target proteins. Probably phosphorylates RseA. This is Serine/threonine-protein kinase PknB (pknB) from Mycolicibacterium smegmatis (strain ATCC 700084 / mc(2)155) (Mycobacterium smegmatis).